The sequence spans 256 residues: Type II phosphatidylinositol 4,5-bisphosphate 4-phosphatase (256 aa).

Residues 1–10 show a composition bias toward basic and acidic residues; that stretch reads MAADGIDERS. The disordered stretch occupies residues 1–25; that stretch reads MAADGIDERSPLISPSSGNVTPTAP. The segment covering 13–22 has biased composition (polar residues); the sequence is ISPSSGNVTP. C106 is a catalytic residue. Positions 106-112 match the CX5R motif motif; sequence CKDISRR. 2 consecutive transmembrane segments (helical) span residues 191-211 and 226-246; these read CCTYITMGMICIFIGVGLTVG and WAVAYLVGLVCLVRACYWGAI.

The protein localises to the late endosome membrane. It localises to the lysosome membrane. The catalysed reaction is a 1,2-diacyl-sn-glycero-3-phospho-(1D-myo-inositol-4,5-bisphosphate) + H2O = a 1,2-diacyl-sn-glycero-3-phospho-(1D-myo-inositol-5-phosphate) + phosphate. Functionally, catalyzes the hydrolysis of phosphatidylinositol-4,5-bisphosphate (PtdIns-4,5-P2) to phosphatidylinositol-4-phosphate (PtdIns-4-P). This is Type II phosphatidylinositol 4,5-bisphosphate 4-phosphatase from Xenopus laevis (African clawed frog).